A 467-amino-acid chain; its full sequence is MHQPGSHQIQPIDSLTPFLGGKWWIRARVADKSDIRTWNKPTSQGKLFSFTLIDESAAIRATVFNDAVDTFEPLVVNGQVYYFSGGQVKNANRRFSNVNNDYELTFDRASEVILARQDSSAAALPMQRYNFVPIELLKQREVGSLVDVLGVVLKVDEISSITQKSTGRELIKRNVKIGDMSAAVEVTFWNDEAKAWNYPVGTVVALRQLKVGSFDGVTLSSTYQTKIDVNPADLPDVKKLATWYVSTGGANVVSLSSQGLGAGGGGGGEGNRGRKYLDEIQSEGIGRGAKPEYVDVRCVPIYFKQDAQWYDACPTCNKKVTEEGAQGDRFRCEKCDATVVPTQRYLVSIQVTDNVSQVWLTLFNEAGVEFFGMEASELKRRAQEDPLYIAKLAQARMNRPVVMRLRVKEETNANAMTGEESDRLRMSVVRISEFMPVAGTTEETRRRLAQNLRSECDDILRCIEAYV.

The segment at residues 23-105 (WWIRARVADK…SNVNNDYELT (83 aa)) is a DNA-binding region (OB). The C4-type zinc-finger motif lies at 313–335 (CPTCNKKVTEEGAQGDRFRCEKC).

It belongs to the replication factor A protein 1 family. Component of the heterotrimeric canonical replication protein A complex (RPA). In terms of processing, the N-terminus is blocked.

It localises to the nucleus. Its function is as follows. As part of the heterotrimeric replication protein A complex (RPA/RP-A), binds and stabilizes single-stranded DNA intermediates, that form during DNA replication or upon DNA stress. It prevents their reannealing and in parallel, recruits and activates different proteins and complexes involved in DNA metabolism. Thereby, it plays an essential role both in DNA replication and the cellular response to DNA damage. The chain is Replication factor A 51 kDa subunit (RPA1) from Crithidia fasciculata.